The sequence spans 181 residues: Protein Syd (181 aa).

The protein belongs to the Syd family.

Its subcellular location is the cell inner membrane. Functionally, interacts with the SecY protein in vivo. May bind preferentially to an uncomplexed state of SecY, thus functioning either as a chelating agent for excess SecY in the cell or as a regulatory factor that negatively controls the translocase function. The protein is Protein Syd of Shigella flexneri serotype 5b (strain 8401).